Consider the following 342-residue polypeptide: Phosphate acyltransferase (342 aa).

It belongs to the PlsX family. Homodimer. Probably interacts with PlsY.

It is found in the cytoplasm. It carries out the reaction a fatty acyl-[ACP] + phosphate = an acyl phosphate + holo-[ACP]. The protein operates within lipid metabolism; phospholipid metabolism. In terms of biological role, catalyzes the reversible formation of acyl-phosphate (acyl-PO(4)) from acyl-[acyl-carrier-protein] (acyl-ACP). This enzyme utilizes acyl-ACP as fatty acyl donor, but not acyl-CoA. In Blochmanniella pennsylvanica (strain BPEN), this protein is Phosphate acyltransferase.